The primary structure comprises 364 residues: Fructose-1,6-bisphosphatase class 1 2 (364 aa).

Residues Glu-101, Asp-123, Leu-125, and Asp-126 each coordinate Mg(2+). Residues 126–129 and Asn-218 contribute to the substrate site; that span reads DGSS. Glu-290 contacts Mg(2+).

It belongs to the FBPase class 1 family. Homotetramer. It depends on Mg(2+) as a cofactor.

Its subcellular location is the cytoplasm. The enzyme catalyses beta-D-fructose 1,6-bisphosphate + H2O = beta-D-fructose 6-phosphate + phosphate. Its pathway is carbohydrate biosynthesis; gluconeogenesis. The protein is Fructose-1,6-bisphosphatase class 1 2 of Cupriavidus necator (strain ATCC 17699 / DSM 428 / KCTC 22496 / NCIMB 10442 / H16 / Stanier 337) (Ralstonia eutropha).